The chain runs to 352 residues: Long-chain-alcohol O-fatty-acyltransferase (352 aa).

8 consecutive transmembrane segments (helical) span residues 13 to 33 (VWIS…VAPH), 34 to 54 (GGAL…FLPL), 67 to 87 (LYLV…LGPL), 128 to 148 (KVVL…IYEF), 155 to 175 (FVIS…TLAA), 239 to 259 (VAGA…VFFF), 267 to 287 (SWEV…EMVV), and 303 to 323 (GALT…PQLV).

Belongs to the wax synthase family.

It is found in the microsome membrane. The enzyme catalyses a long chain fatty alcohol + a fatty acyl-CoA = a wax ester + CoA. Functionally, catalyzes the final step in the synthesis of long-chain linear esters (waxes). Has activity with both saturated and monounsaturated acyl-CoA ranging from 14 to 24 carbons in length, but C20:1 acyl-CoA is the preferred substrate. This Simmondsia chinensis (Jojoba) protein is Long-chain-alcohol O-fatty-acyltransferase.